A 267-amino-acid polypeptide reads, in one-letter code: tRNA pseudouridine synthase A (267 aa).

Asp53 (nucleophile) is an active-site residue. A substrate-binding site is contributed by Tyr114.

It belongs to the tRNA pseudouridine synthase TruA family. Homodimer.

It catalyses the reaction uridine(38/39/40) in tRNA = pseudouridine(38/39/40) in tRNA. Its function is as follows. Formation of pseudouridine at positions 38, 39 and 40 in the anticodon stem and loop of transfer RNAs. In Chlamydia trachomatis serovar L2b (strain UCH-1/proctitis), this protein is tRNA pseudouridine synthase A.